Here is a 1405-residue protein sequence, read N- to C-terminus: DNA-directed RNA polymerase subunit beta' (1405 aa).

Zn(2+) contacts are provided by C70, C72, C85, and C88. D460, D462, and D464 together coordinate Mg(2+). Residues C814, C888, C895, and C898 each contribute to the Zn(2+) site.

This sequence belongs to the RNA polymerase beta' chain family. In terms of assembly, the RNAP catalytic core consists of 2 alpha, 1 beta, 1 beta' and 1 omega subunit. When a sigma factor is associated with the core the holoenzyme is formed, which can initiate transcription. Mg(2+) is required as a cofactor. Zn(2+) serves as cofactor.

The catalysed reaction is RNA(n) + a ribonucleoside 5'-triphosphate = RNA(n+1) + diphosphate. Its function is as follows. DNA-dependent RNA polymerase catalyzes the transcription of DNA into RNA using the four ribonucleoside triphosphates as substrates. The sequence is that of DNA-directed RNA polymerase subunit beta' from Shewanella sp. (strain MR-7).